The sequence spans 512 residues: 2-isopropylmalate synthase (512 aa).

Residues 5 to 267 (LYIFDTTLRD…DSRVDATQIV (263 aa)) enclose the Pyruvate carboxyltransferase domain. Mn(2+) contacts are provided by Asp14, His202, His204, and Asn238. A regulatory domain region spans residues 393 to 512 (KLVSLKVVSE…EEKMNAQAAA (120 aa)).

Belongs to the alpha-IPM synthase/homocitrate synthase family. LeuA type 1 subfamily. As to quaternary structure, homodimer. Mn(2+) is required as a cofactor.

The protein localises to the cytoplasm. It carries out the reaction 3-methyl-2-oxobutanoate + acetyl-CoA + H2O = (2S)-2-isopropylmalate + CoA + H(+). It participates in amino-acid biosynthesis; L-leucine biosynthesis; L-leucine from 3-methyl-2-oxobutanoate: step 1/4. In terms of biological role, catalyzes the condensation of the acetyl group of acetyl-CoA with 3-methyl-2-oxobutanoate (2-ketoisovalerate) to form 3-carboxy-3-hydroxy-4-methylpentanoate (2-isopropylmalate). The sequence is that of 2-isopropylmalate synthase from Chromobacterium violaceum (strain ATCC 12472 / DSM 30191 / JCM 1249 / CCUG 213 / NBRC 12614 / NCIMB 9131 / NCTC 9757 / MK).